A 313-amino-acid chain; its full sequence is Phosphoenolpyruvate phosphomutase (313 aa).

Residues 1–23 (MNATERPGSDGTGSPESVGSRLK) are disordered. D69 acts as the Nucleophile in catalysis.

Belongs to the isocitrate lyase/PEP mutase superfamily. PEP mutase family.

It catalyses the reaction phosphoenolpyruvate + H(+) = 3-phosphonopyruvate. Its pathway is secondary metabolite biosynthesis; bialaphos biosynthesis. Formation of a carbon-phosphorus bond by converting phosphoenolpyruvate (PEP) to phosphonopyruvate (P-Pyr). In Streptomyces viridochromogenes (strain DSM 40736 / JCM 4977 / BCRC 1201 / Tue 494), this protein is Phosphoenolpyruvate phosphomutase (ppm).